Consider the following 497-residue polypeptide: Serine hydroxymethyltransferase (497 aa).

(6S)-5,6,7,8-tetrahydrofolate contacts are provided by residues Leu176 and 180 to 182 (GHL). At Lys289 the chain carries N6-(pyridoxal phosphate)lysine.

The protein belongs to the SHMT family. Homodimer. Pyridoxal 5'-phosphate serves as cofactor.

The protein resides in the cytoplasm. The catalysed reaction is (6R)-5,10-methylene-5,6,7,8-tetrahydrofolate + glycine + H2O = (6S)-5,6,7,8-tetrahydrofolate + L-serine. The protein operates within one-carbon metabolism; tetrahydrofolate interconversion. It functions in the pathway amino-acid biosynthesis; glycine biosynthesis; glycine from L-serine: step 1/1. Functionally, catalyzes the reversible interconversion of serine and glycine with tetrahydrofolate (THF) serving as the one-carbon carrier. This reaction serves as the major source of one-carbon groups required for the biosynthesis of purines, thymidylate, methionine, and other important biomolecules. Also exhibits THF-independent aldolase activity toward beta-hydroxyamino acids, producing glycine and aldehydes, via a retro-aldol mechanism. This chain is Serine hydroxymethyltransferase, found in Chlamydia trachomatis serovar A (strain ATCC VR-571B / DSM 19440 / HAR-13).